The following is a 906-amino-acid chain: MQNLAPWESFFMFVNILLRDYEPVKRRQQGSESNEVMKYSFTVDTLICRELFRSILKEKTLGILGDYLNRECIFERTKKLVKLNYNDDEYDYDLDDILKIRKNSSGKLIVDDIDQAIFIIDHLSRKVDCKVFTKKSLVGFRHIEKTITEAGYKIRERRSIGLDWYTLLNDIRTSCAKHRTFVAFSKYRYVDFIAMLTAFHQVKAAKSNEEEHLSTIYSLYPFVEHNFDEDKEDAATTKQTTTTTTTTPQTRTRKRQATGDNTPTPTPAPAPKPTTPKPTPAPRKISSRKNGGLTNVRVDHISVNNIPTPSDTNESLSPPSTIISSSNSIKQCLVEVLESKGEISIDKIKSIFNCLQNKQYTGDLIDSMFQQNKSEKVITISSKLFNMSNKVDYDEINFAKLKDDILYLSRRLIYEKNTNLLIPTEEGEGIIGFLWLPVVNGALTASVYVSQLGADVDFKKISATVRFVQLCISMSDIIGFMELRSLSLDAFRSIANELLYMSDRILNLEADLRTLKDIVMKPTNLKKHVNVDNLFSRLSPEGSNGFANYLYDFISNHPYIKIDKSQNSIKLKETPNPVLVLTYDPKVVEHKVGFLFHCRSEISRFNAGGNKFILNNIQHSFTPNNIGVLSQDRENDLKRNYSMLTSNTSKLITGTGSGEHNLERFISITINNTAYDLIRVVLFRDISNGISISNLRDIFRENSDNRNRYLEYLGKSRLIRVFFIAPCLIQILEVNFAATQLTADKNFNRAIKSIKIRNLSYITIDIIVGGNVIDSIRGDATQVVQINASEFSFSVSCLKFSVSATLVSKKNLQNISTIVLNKYNEEKSYLQCVKKFSKLSKSFIRKFTGMNININALEELLLSEAGAYEDDDDDEGEGNEDDEDNDENEDEDEGEGEGDSSEDEDE.

Disordered regions lie at residues 231–322 (KEDA…PSTI) and 865–906 (AGAY…DEDE). Residues 236 to 250 (TTKQTTTTTTTTPQT) show a composition bias toward low complexity. Residues 264-281 (TPTPAPAPKPTTPKPTPA) are compositionally biased toward pro residues. A compositionally biased stretch (polar residues) spans 302–314 (SVNNIPTPSDTNE). Positions 867-906 (AYEDDDDDEGEGNEDDEDNDENEDEDEGEGEGDSSEDEDE) are enriched in acidic residues.

This is an uncharacterized protein from Dictyostelium sp. (strain GA11) (Slime mold).